A 399-amino-acid polypeptide reads, in one-letter code: Elongation factor Tu (399 aa).

The tr-type G domain occupies 10–204 (KPHVNIGTIG…AVDASIPEPE (195 aa)). The interval 19-26 (GHVDHGKT) is G1. 19-26 (GHVDHGKT) lines the GTP pocket. Threonine 26 is a binding site for Mg(2+). Residues 60-64 (GITIN) are G2. The tract at residues 81-84 (DCPG) is G3. GTP-binding positions include 81–85 (DCPGH) and 136–139 (NKCD). The segment at 136–139 (NKCD) is G4. Residues 174–176 (SGL) form a G5 region.

This sequence belongs to the TRAFAC class translation factor GTPase superfamily. Classic translation factor GTPase family. EF-Tu/EF-1A subfamily. Monomer.

Its subcellular location is the cytoplasm. It carries out the reaction GTP + H2O = GDP + phosphate + H(+). In terms of biological role, GTP hydrolase that promotes the GTP-dependent binding of aminoacyl-tRNA to the A-site of ribosomes during protein biosynthesis. The chain is Elongation factor Tu from Synechococcus sp. (strain CC9902).